The primary structure comprises 59 residues: Large ribosomal subunit protein bL32 (59 aa).

Positions 1 to 22 (MAVPKKKTSNSKRDSRRAHWNR) are enriched in basic residues. Residues 1-59 (MAVPKKKTSNSKRDSRRAHWNRKANLAAQRALSTGKSILTGRAKGFEYPTKDDDEDDDE) are disordered.

It belongs to the bacterial ribosomal protein bL32 family.

The polypeptide is Large ribosomal subunit protein bL32 (Acaryochloris marina (strain MBIC 11017)).